Here is a 444-residue protein sequence, read N- to C-terminus: Ribosomal protein uS12 methylthiotransferase RimO (444 aa).

The MTTase N-terminal domain maps to 4–118 (IKYGVVSLGC…LSDAIKKSIE (115 aa)). [4Fe-4S] cluster contacts are provided by cysteine 13, cysteine 48, cysteine 81, cysteine 155, cysteine 159, and cysteine 162. One can recognise a Radical SAM core domain in the interval 141-373 (TTQKHYAYLR…MQRDIVKSIN (233 aa)). The region spanning 374–440 (ADKVNKVYKV…EYDLIGVVCD (67 aa)) is the TRAM domain.

The protein belongs to the methylthiotransferase family. RimO subfamily. It depends on [4Fe-4S] cluster as a cofactor.

The protein resides in the cytoplasm. The catalysed reaction is L-aspartate(89)-[ribosomal protein uS12]-hydrogen + (sulfur carrier)-SH + AH2 + 2 S-adenosyl-L-methionine = 3-methylsulfanyl-L-aspartate(89)-[ribosomal protein uS12]-hydrogen + (sulfur carrier)-H + 5'-deoxyadenosine + L-methionine + A + S-adenosyl-L-homocysteine + 2 H(+). Catalyzes the methylthiolation of an aspartic acid residue of ribosomal protein uS12. The chain is Ribosomal protein uS12 methylthiotransferase RimO from Clostridium tetani (strain Massachusetts / E88).